The primary structure comprises 342 residues: MTIRIAINGFGRIGRNVVRALYESGRRAEITVVAINELADAAGIAHLLKYDTSHGRFAWDVRQEREQLFVGDDSIRLLHEPTIAALPWRELAVDVVLDCTGVYGSREHGEAHLQAGAKKVLFSHPGGNDLDATVVYGVNQDELRAGHRIVSNASCTTNCIIPIIKLLDDAYGIESGTVTTIHSAMHDQQVIDAYHPDLRRTRAASQSIIPVDTKLAAGITRIFPQFNDRFEAIAVRVPTINVTAIDLSVTVKKPVKACEVNQLLQKAAQGAFHGIVDYTELPLVSTDFNHDPHSAIVDGTQTRVSGAHLIKTLVWCDNEWGFANRMLDTTLAMAAIGFRFDA.

12 to 13 (RI) is an NAD(+) binding site. Substrate-binding positions include 154–156 (SCT), Arg200, 213–214 (TK), and Arg236. The active-site Nucleophile is the Cys155. Asn318 lines the NAD(+) pocket.

The protein belongs to the glyceraldehyde-3-phosphate dehydrogenase family. Epd subfamily. Homotetramer.

Its subcellular location is the cytoplasm. It carries out the reaction D-erythrose 4-phosphate + NAD(+) + H2O = 4-phospho-D-erythronate + NADH + 2 H(+). It participates in cofactor biosynthesis; pyridoxine 5'-phosphate biosynthesis; pyridoxine 5'-phosphate from D-erythrose 4-phosphate: step 1/5. Its function is as follows. Catalyzes the NAD-dependent conversion of D-erythrose 4-phosphate to 4-phosphoerythronate. This is D-erythrose-4-phosphate dehydrogenase from Klebsiella pneumoniae subsp. pneumoniae (strain ATCC 700721 / MGH 78578).